The sequence spans 191 residues: Protein GrpE (191 aa).

The segment covering 1-13 (MSEKKNKKEKLAE) has biased composition (basic and acidic residues). The segment at 1 to 40 (MSEKKNKKEKLAEEIEQEELNSLDESVETVEEEATEETLT) is disordered. Acidic residues predominate over residues 14 to 40 (EIEQEELNSLDESVETVEEEATEETLT).

It belongs to the GrpE family. In terms of assembly, homodimer.

Its subcellular location is the cytoplasm. In terms of biological role, participates actively in the response to hyperosmotic and heat shock by preventing the aggregation of stress-denatured proteins, in association with DnaK and GrpE. It is the nucleotide exchange factor for DnaK and may function as a thermosensor. Unfolded proteins bind initially to DnaJ; upon interaction with the DnaJ-bound protein, DnaK hydrolyzes its bound ATP, resulting in the formation of a stable complex. GrpE releases ADP from DnaK; ATP binding to DnaK triggers the release of the substrate protein, thus completing the reaction cycle. Several rounds of ATP-dependent interactions between DnaJ, DnaK and GrpE are required for fully efficient folding. In Listeria innocua serovar 6a (strain ATCC BAA-680 / CLIP 11262), this protein is Protein GrpE.